The sequence spans 335 residues: 3-dehydroquinate synthase (335 aa).

Residues 56 to 61 (DGEKYK), 90 to 94 (GVITD), 114 to 115 (TT), lysine 127, lysine 135, and 153 to 156 (FLKT) contribute to the NAD(+) site. 3 residues coordinate Zn(2+): glutamate 168, histidine 227, and histidine 243.

The protein belongs to the sugar phosphate cyclases superfamily. Dehydroquinate synthase family. Requires NAD(+) as cofactor. Co(2+) serves as cofactor. Zn(2+) is required as a cofactor.

It is found in the cytoplasm. It carries out the reaction 7-phospho-2-dehydro-3-deoxy-D-arabino-heptonate = 3-dehydroquinate + phosphate. It participates in metabolic intermediate biosynthesis; chorismate biosynthesis; chorismate from D-erythrose 4-phosphate and phosphoenolpyruvate: step 2/7. Its function is as follows. Catalyzes the conversion of 3-deoxy-D-arabino-heptulosonate 7-phosphate (DAHP) to dehydroquinate (DHQ). The sequence is that of 3-dehydroquinate synthase from Pyrococcus furiosus (strain ATCC 43587 / DSM 3638 / JCM 8422 / Vc1).